The chain runs to 359 residues: Acetoin catabolism protein X (359 aa).

The protein localises to the cell membrane. It functions in the pathway ketone degradation; acetoin degradation. Essential for acetoin catabolism. This chain is Acetoin catabolism protein X (acoX), found in Cupriavidus necator (strain ATCC 17699 / DSM 428 / KCTC 22496 / NCIMB 10442 / H16 / Stanier 337) (Ralstonia eutropha).